The primary structure comprises 205 residues: LexA repressor (205 aa).

The segment at residues 28–48 (RAEIAKRLGFKSANAAEEHLK) is a DNA-binding region (H-T-H motif). Residues Ser-122 and Lys-159 each act as for autocatalytic cleavage activity in the active site.

This sequence belongs to the peptidase S24 family. In terms of assembly, homodimer.

It carries out the reaction Hydrolysis of Ala-|-Gly bond in repressor LexA.. Its function is as follows. Represses a number of genes involved in the response to DNA damage (SOS response), including recA and lexA. In the presence of single-stranded DNA, RecA interacts with LexA causing an autocatalytic cleavage which disrupts the DNA-binding part of LexA, leading to derepression of the SOS regulon and eventually DNA repair. This Shewanella woodyi (strain ATCC 51908 / MS32) protein is LexA repressor.